The primary structure comprises 593 residues: Proline--tRNA ligase (593 aa).

The protein belongs to the class-II aminoacyl-tRNA synthetase family. ProS type 1 subfamily. In terms of assembly, homodimer.

Its subcellular location is the cytoplasm. The enzyme catalyses tRNA(Pro) + L-proline + ATP = L-prolyl-tRNA(Pro) + AMP + diphosphate. Catalyzes the attachment of proline to tRNA(Pro) in a two-step reaction: proline is first activated by ATP to form Pro-AMP and then transferred to the acceptor end of tRNA(Pro). As ProRS can inadvertently accommodate and process non-cognate amino acids such as alanine and cysteine, to avoid such errors it has two additional distinct editing activities against alanine. One activity is designated as 'pretransfer' editing and involves the tRNA(Pro)-independent hydrolysis of activated Ala-AMP. The other activity is designated 'posttransfer' editing and involves deacylation of mischarged Ala-tRNA(Pro). The misacylated Cys-tRNA(Pro) is not edited by ProRS. The protein is Proline--tRNA ligase of Synechococcus sp. (strain CC9902).